We begin with the raw amino-acid sequence, 226 residues long: MESYKSEFIDFMVESDVLKFGDFTLKSGRKSPFFMNAGAYVTGSQLKRLGEYYAKAIHANYGDDFDVLFGPAYKGIPLAVVTAIAYHELYGKEVRYCSDRKEAKDHGADKGGFLGSKLKDGDRVVMIEDVTTSGKSMEETVPKVRGAADVTIVGLMVSLNRMEVGQGGKVSALDEIHEKYGFEGKAIVTMEEVTEYLYNREHDGRVVIDDTIKAAIDEYYKQYGCK.

Residues Lys26, 73–74 (YK), Arg100, Lys101, Lys104, His106, and 128–136 (EDVTTSGKS) each bind 5-phospho-alpha-D-ribose 1-diphosphate. Positions 132 and 161 each coordinate orotate.

This sequence belongs to the purine/pyrimidine phosphoribosyltransferase family. PyrE subfamily. Homodimer. The cofactor is Mg(2+).

The catalysed reaction is orotidine 5'-phosphate + diphosphate = orotate + 5-phospho-alpha-D-ribose 1-diphosphate. It functions in the pathway pyrimidine metabolism; UMP biosynthesis via de novo pathway; UMP from orotate: step 1/2. Catalyzes the transfer of a ribosyl phosphate group from 5-phosphoribose 1-diphosphate to orotate, leading to the formation of orotidine monophosphate (OMP). In Agathobacter rectalis (strain ATCC 33656 / DSM 3377 / JCM 17463 / KCTC 5835 / VPI 0990) (Eubacterium rectale), this protein is Orotate phosphoribosyltransferase.